Reading from the N-terminus, the 1033-residue chain is Calcium-transporting ATPase 12, plasma membrane-type (1033 aa).

At Met-1 the chain carries N-acetylmethionine. Residues 1-152 (MRDLKEYDYS…NTYHKPPPKG (152 aa)) are Cytoplasmic-facing. The interaction with calmodulin stretch occupies residues 25 to 36 (QRRWRFAYAAIY). Phosphoserine is present on Ser-37. A helical membrane pass occupies residues 153-173 (LLFFVYEAFKDLTILILLVCA). Topologically, residues 174 to 191 (IFSLGFGIKEHGIKEGWY) are lumenal. The chain crosses the membrane as a helical span at residues 192 to 212 (EGGSIFVAVFLVIVVSALSNF). The Cytoplasmic portion of the chain corresponds to 213–341 (RQERQFDKLS…SERTPLQVRL (129 aa)). The chain crosses the membrane as a helical span at residues 342-361 (DTLTSTIGKIGLTVAALVLV). At 362 to 397 (VLLVRYFTGNTEKEGKREYNGSKTPVDTVVNSVVRI) the chain is on the lumenal side. A helical transmembrane segment spans residues 398–415 (VAAAVTIVVVAIPEGLPL). At 416-806 (AVTLTLAYSM…KWGRCVYNNI (391 aa)) the chain is on the cytoplasmic side. Residue Asp-453 is the 4-aspartylphosphate intermediate of the active site. Residues Asp-751 and Asp-755 each contribute to the Mg(2+) site. A helical membrane pass occupies residues 807–825 (QKFIQFQLTVNVAALVINF). Over 826–836 (IAAISAGEVPL) the chain is Lumenal. The chain crosses the membrane as a helical span at residues 837 to 857 (TAVQLLWVNLIMDTLGALALA). At 858–877 (TERPTNELLKRKPVGRTEAL) the chain is on the cytoplasmic side. A helical membrane pass occupies residues 878 to 900 (ITNVMWRNLLVQSLYQIAVLLIL). Residues 901–909 (QFKGMSIFS) are Lumenal-facing. A helical transmembrane segment spans residues 910–930 (VRKEVKDTLIFNTFVLCQVFN). Topologically, residues 931–948 (EFNAREMEKKNVFKGLHR) are cytoplasmic. The helical transmembrane segment at 949–970 (NRLFIGIIAITIVLQVIMVEFL) threads the bilayer. At 971-980 (KKFADTVRLN) the chain is on the lumenal side. The chain crosses the membrane as a helical span at residues 981-1002 (GWQWGTCIALASLSWPIGFFTK). The Cytoplasmic segment spans residues 1003–1006 (FIPV).

This sequence belongs to the cation transport ATPase (P-type) (TC 3.A.3) family. Type IIB subfamily.

It localises to the membrane. The catalysed reaction is Ca(2+)(in) + ATP + H2O = Ca(2+)(out) + ADP + phosphate + H(+). With respect to regulation, activated by calmodulin. This magnesium-dependent enzyme catalyzes the hydrolysis of ATP coupled with the translocation of calcium from the cytosol out of the cell or into organelles. The chain is Calcium-transporting ATPase 12, plasma membrane-type (ACA12) from Arabidopsis thaliana (Mouse-ear cress).